A 334-amino-acid polypeptide reads, in one-letter code: Mucin-15 (334 aa).

An N-terminal signal peptide occupies residues 1-23 (MLALAKILLISTLFYSLLSGSHG). Topologically, residues 24–236 (KENQDINTTQ…SDPQKENRNT (213 aa)) are extracellular. Asn-30, Asn-61, Asn-79, Asn-90, Asn-148, Asn-155, Asn-163, Asn-218, and Asn-225 each carry an N-linked (GlcNAc...) asparagine glycan. The interval 64-104 (TSNLKASHSPPLNLPNNSHGITDFSSNSSAEHSLGSLKPTS) is disordered. Polar residues predominate over residues 77–94 (LPNNSHGITDFSSNSSAE). The chain crosses the membrane as a helical span at residues 237–257 (GIVFGAILGAILGVSLLTLVG). Topologically, residues 258-334 (YLLCGKRKTD…DDIPPLRTSV (77 aa)) are cytoplasmic. A disordered region spans residues 304–334 (PTLNDSAMPESEENARDGIPMDDIPPLRTSV).

In terms of processing, highly glycosylated (N- and O-linked carbohydrates). Expressed in spleen, thymus, prostate, testis, ovary, small intestine, colon, peripheral blood leukocyte, bone marrow, lymph node and lung.

The protein resides in the cell membrane. The protein localises to the secreted. Functionally, may play a role in the cell adhesion to the extracellular matrix. This Homo sapiens (Human) protein is Mucin-15 (MUC15).